Here is a 243-residue protein sequence, read N- to C-terminus: Small ribosomal subunit protein eS4 (243 aa).

Residues 43–105 enclose the S4 RNA-binding domain; sequence IPLIYIVRDY…TGEHYRVLPN (63 aa).

It belongs to the eukaryotic ribosomal protein eS4 family. Part of the 30S ribosomal subunit.

The sequence is that of Small ribosomal subunit protein eS4 from Thermococcus kodakarensis (strain ATCC BAA-918 / JCM 12380 / KOD1) (Pyrococcus kodakaraensis (strain KOD1)).